Reading from the N-terminus, the 859-residue chain is Leucine--tRNA ligase (859 aa).

The short motif at 42 to 52 (PYPSGRLHMGH) is the 'HIGH' region element. The short motif at 618–622 (KMSKS) is the 'KMSKS' region element. Lysine 621 is an ATP binding site.

Belongs to the class-I aminoacyl-tRNA synthetase family.

Its subcellular location is the cytoplasm. The catalysed reaction is tRNA(Leu) + L-leucine + ATP = L-leucyl-tRNA(Leu) + AMP + diphosphate. The protein is Leucine--tRNA ligase of Shewanella amazonensis (strain ATCC BAA-1098 / SB2B).